The primary structure comprises 89 residues: Small ribosomal subunit protein uS15 (89 aa).

The protein belongs to the universal ribosomal protein uS15 family. Part of the 30S ribosomal subunit. Forms a bridge to the 50S subunit in the 70S ribosome, contacting the 23S rRNA.

One of the primary rRNA binding proteins, it binds directly to 16S rRNA where it helps nucleate assembly of the platform of the 30S subunit by binding and bridging several RNA helices of the 16S rRNA. In terms of biological role, forms an intersubunit bridge (bridge B4) with the 23S rRNA of the 50S subunit in the ribosome. The chain is Small ribosomal subunit protein uS15 from Paraburkholderia phymatum (strain DSM 17167 / CIP 108236 / LMG 21445 / STM815) (Burkholderia phymatum).